A 127-amino-acid polypeptide reads, in one-letter code: Large ribosomal subunit protein uL18 (127 aa).

The protein belongs to the universal ribosomal protein uL18 family. In terms of assembly, part of the 50S ribosomal subunit; part of the 5S rRNA/L5/L18/L25 subcomplex. Contacts the 5S and 23S rRNAs.

Functionally, this is one of the proteins that bind and probably mediate the attachment of the 5S RNA into the large ribosomal subunit, where it forms part of the central protuberance. This chain is Large ribosomal subunit protein uL18, found in Streptomyces coelicolor (strain ATCC BAA-471 / A3(2) / M145).